A 199-amino-acid chain; its full sequence is UPF0462 protein C4orf33 homolog (199 aa).

The protein belongs to the UPF0462 family.

This Rattus norvegicus (Rat) protein is UPF0462 protein C4orf33 homolog.